Reading from the N-terminus, the 439-residue chain is UPF0597 protein Dalk_4447 (439 aa).

This sequence belongs to the UPF0597 family.

The sequence is that of UPF0597 protein Dalk_4447 from Desulfatibacillum aliphaticivorans.